Here is a 365-residue protein sequence, read N- to C-terminus: Eukaryotic translation initiation factor 3 subunit H (365 aa).

In terms of domain architecture, MPN spans isoleucine 15 to alanine 166.

It belongs to the eIF-3 subunit H family. In terms of assembly, component of the eukaryotic translation initiation factor 3 (eIF-3) complex.

It is found in the cytoplasm. Its function is as follows. Component of the eukaryotic translation initiation factor 3 (eIF-3) complex, which is involved in protein synthesis of a specialized repertoire of mRNAs and, together with other initiation factors, stimulates binding of mRNA and methionyl-tRNAi to the 40S ribosome. The eIF-3 complex specifically targets and initiates translation of a subset of mRNAs involved in cell proliferation. The polypeptide is Eukaryotic translation initiation factor 3 subunit H (Caenorhabditis elegans).